A 104-amino-acid chain; its full sequence is PLAT domain-containing protein 3 (104 aa).

The PLAT domain maps to 1–104; the sequence is MSLRLYDSYG…LARDASPYEL (104 aa).

This is PLAT domain-containing protein 3 from Arabidopsis thaliana (Mouse-ear cress).